The following is a 291-amino-acid chain: Elongation factor Ts (291 aa).

The segment at 80 to 83 (TDFV) is involved in Mg(2+) ion dislocation from EF-Tu.

This sequence belongs to the EF-Ts family.

It is found in the cytoplasm. Functionally, associates with the EF-Tu.GDP complex and induces the exchange of GDP to GTP. It remains bound to the aminoacyl-tRNA.EF-Tu.GTP complex up to the GTP hydrolysis stage on the ribosome. The chain is Elongation factor Ts from Ligilactobacillus salivarius (strain UCC118) (Lactobacillus salivarius).